Reading from the N-terminus, the 61-residue chain is UPF0391 membrane protein Aave_0978 (61 aa).

Transmembrane regions (helical) follow at residues 5-25 (AIIFAIISLIAGALGFSGVAA) and 33-53 (ILFFLFLVVAVIFIVLAVLGV).

The protein belongs to the UPF0391 family.

Its subcellular location is the cell membrane. This chain is UPF0391 membrane protein Aave_0978, found in Paracidovorax citrulli (strain AAC00-1) (Acidovorax citrulli).